Consider the following 294-residue polypeptide: Foldase protein PrsA 1 (294 aa).

Positions 1 to 21 (MTKLKKVMISVIAATLLLLAG) are cleaved as a signal peptide. The N-palmitoyl cysteine moiety is linked to residue cysteine 22. The S-diacylglycerol cysteine moiety is linked to residue cysteine 22. In terms of domain architecture, PpiC spans 135–226 (EPDITVRHIL…YGYHLIQLVK (92 aa)).

This sequence belongs to the PrsA family.

It localises to the cell membrane. It carries out the reaction [protein]-peptidylproline (omega=180) = [protein]-peptidylproline (omega=0). In terms of biological role, plays a major role in protein secretion by helping the post-translocational extracellular folding of several secreted proteins. In Listeria monocytogenes serovar 1/2a (strain ATCC BAA-679 / EGD-e), this protein is Foldase protein PrsA 1 (prsA1).